The primary structure comprises 206 residues: Small ribosomal subunit protein uS4 (206 aa).

The S4 RNA-binding domain occupies 96–156; that stretch reads TRLDNVVYRM…EKSRTQARIK (61 aa).

The protein belongs to the universal ribosomal protein uS4 family. As to quaternary structure, part of the 30S ribosomal subunit. Contacts protein S5. The interaction surface between S4 and S5 is involved in control of translational fidelity.

One of the primary rRNA binding proteins, it binds directly to 16S rRNA where it nucleates assembly of the body of the 30S subunit. Its function is as follows. With S5 and S12 plays an important role in translational accuracy. The sequence is that of Small ribosomal subunit protein uS4 from Shewanella denitrificans (strain OS217 / ATCC BAA-1090 / DSM 15013).